Here is a 367-residue protein sequence, read N- to C-terminus: Putative zinc metalloprotease mll0638 (367 aa).

Residue His20 participates in Zn(2+) binding. Glu21 is an active-site residue. His24 lines the Zn(2+) pocket. The next 3 helical transmembrane spans lie at 108 to 130, 291 to 313, and 343 to 365; these read ATVV…VLFA, LGFE…LNLL, and MAYR…NDLF. A PDZ domain is found at 121 to 196; sequence TIVVFSVLFA…ITFVMLRDGK (76 aa).

Belongs to the peptidase M50B family. Zn(2+) serves as cofactor.

It is found in the cell inner membrane. The protein is Putative zinc metalloprotease mll0638 of Mesorhizobium japonicum (strain LMG 29417 / CECT 9101 / MAFF 303099) (Mesorhizobium loti (strain MAFF 303099)).